The primary structure comprises 337 residues: tRNA N6-adenosine threonylcarbamoyltransferase (337 aa).

Residues His-111 and His-115 each contribute to the Fe cation site. Residues 134–138 (LVSGG), Asp-167, Gly-180, and Asn-272 each bind substrate. Asp-300 contacts Fe cation.

Belongs to the KAE1 / TsaD family. The cofactor is Fe(2+).

It localises to the cytoplasm. It catalyses the reaction L-threonylcarbamoyladenylate + adenosine(37) in tRNA = N(6)-L-threonylcarbamoyladenosine(37) in tRNA + AMP + H(+). In terms of biological role, required for the formation of a threonylcarbamoyl group on adenosine at position 37 (t(6)A37) in tRNAs that read codons beginning with adenine. Is involved in the transfer of the threonylcarbamoyl moiety of threonylcarbamoyl-AMP (TC-AMP) to the N6 group of A37, together with TsaE and TsaB. TsaD likely plays a direct catalytic role in this reaction. The polypeptide is tRNA N6-adenosine threonylcarbamoyltransferase (Salmonella schwarzengrund (strain CVM19633)).